The sequence spans 79 residues: EAMZP30-47 protein (79 aa).

Over residues 1–12 (HAASPRGRPQQR) the composition is skewed to low complexity. A disordered region spans residues 1–47 (HAASPRGRPQQRSSRHGAEGPDTTRRGSCCSSSSSCCRPSTPRHPHN). The segment covering 16 to 25 (HGAEGPDTTR) has biased composition (basic and acidic residues). The segment covering 28–37 (SCCSSSSSCC) has biased composition (low complexity).

The protein resides in the membrane. The protein localises to the cell membrane. It is found in the cytoplasmic vesicle. It localises to the secretory vesicle. Its subcellular location is the rhoptry. This chain is EAMZP30-47 protein (CMC17), found in Eimeria acervulina (Coccidian parasite).